The primary structure comprises 318 residues: Putative fimbrium tip subunit Fim1F (318 aa).

Residues 1-24 (MRFNVVLFMLIVALLGGLSTCSSE) form the signal peptide. The propeptide occupies 25–50 (VPIGFDTDELSFDMSLVLLTGDMQTK).

This sequence belongs to the bacteroidetes fimbrillin superfamily. FimA/Mfa1 family. In terms of assembly, may be part of the fimbrial tip.

Its subcellular location is the fimbrium. Functionally, putative component of the fimbrium tip. Fimbriae are filamentous appendages on the cell surface that mediate cell adhesion and biofilm formation. The polypeptide is Putative fimbrium tip subunit Fim1F (Parabacteroides distasonis (strain ATCC 8503 / DSM 20701 / CIP 104284 / JCM 5825 / NCTC 11152)).